The primary structure comprises 309 residues: Cilia-and flagella-associated protein 96 (309 aa).

Residues 220 to 249 (EEKKKTISNTFKPSSPGKKPGGMKAGTFDP) form a disordered region.

It belongs to the CFAP96 family. In terms of tissue distribution, detected in testis and fetal liver.

It localises to the cytoplasm. The protein resides in the cytoskeleton. Its subcellular location is the microtubule organizing center. It is found in the centrosome. The chain is Cilia-and flagella-associated protein 96 from Homo sapiens (Human).